The primary structure comprises 78 residues: Beta-defensin 105 (78 aa).

The N-terminal stretch at 1–27 (MALIRKTFYFLFAMFFILVQLPSGCQA) is a signal peptide. 3 cysteine pairs are disulfide-bonded: Cys-43–Cys-74, Cys-53–Cys-67, and Cys-57–Cys-73.

The protein belongs to the beta-defensin family. As to expression, specifically expressed in testis.

It is found in the secreted. In terms of biological role, has antibacterial activity. The sequence is that of Beta-defensin 105 (DEFB105A) from Homo sapiens (Human).